Here is a 277-residue protein sequence, read N- to C-terminus: Caspase-6 (277 aa).

A propeptide spanning residues 1–5 (MTETD) is cleaved from the precursor. The tract at residues 25–27 (KRR) is tri-arginine exosite. Position 62 is a phosphoserine (S62). The active site involves H104. Residues 108 to 125 (NHIYAYDAKIEIQTLTGL) form a 130's region region. The active site involves C146. The propeptide occupies 163–176 (HQTDKLDDNVTQVD). A Phosphoserine modification is found at S240. 2 S-palmitoyl cysteine lipidation sites follow: C247 and C260.

This sequence belongs to the peptidase C14A family. Heterotetramer that consists of two anti-parallel arranged heterodimers, each one formed by a 18 kDa (p18) and a 11 kDa (p11) subunits. Interacts with BIRC6/bruce. Interacts with RIPK3. In terms of assembly, heterotetramer that consists of two anti-parallel arranged heterodimers, each one formed by a 18 kDa (Caspase-6 subunit p18) and a 11 kDa (Caspase-6 subunit p11) subunit. Post-translationally, phosphorylated by NUAK1; phosphorylation inhibits self-activation. Phosphorylation at Ser-240 by AMP-activated protein kinase (PRKAA1 or PRKAA2) inhibits autocleavage, preventing caspase activation, thereby preventing hepatocyte apoptosis. In terms of processing, palmitoylation by ZDHHC17 blocks dimerization and subsequent activation, leading to inhibit the cysteine protease activity. Can be cleaved and activated by different caspases, depending on the context. Cleaved and activated by caspase-8 (CASP8) and subsequently by caspase-3 (CASP3). Can also undergo autoactivation by mediating autocleavage at Asp-162 and Asp-176, while it is not able to cleave its N-terminal disordered prodomain. Cleaved and activated by CASP1, possibly in the context of inflammation.

The protein localises to the cytoplasm. Its subcellular location is the nucleus. The enzyme catalyses Strict requirement for Asp at position P1 and has a preferred cleavage sequence of Val-Glu-His-Asp-|-.. During activation, the N-terminal disordered prodomain is removed by cleavage. Concomitantly, double cleavage gives rise to a large 18-kDa and a small 11-kDa subunit. The two large and two small subunits then assemble to form the active CASP6 complex. Can be cleaved and activated by different caspases, depending on the context. Cleaved and activated by caspase-8 (CASP8) and subsequently by caspase-3 (CASP3). Can also undergo autoactivation by mediating autocleavage at Asp-162 and Asp-176, while it is not able to cleave its N-terminal disordered prodomain. Intramolecular cleavage at Asp-176 is a prerequisite for CASP6 self-activation. Cleaved and activated by CASP1 in neurons, possibly in the context of inflammation. Phosphorylation at Ser-240 inhibits autocleavage, preventing caspase activation. Cysteine protease that plays essential roles in programmed cell death, axonal degeneration, development and innate immunity. Acts as a non-canonical executioner caspase during apoptosis: localizes in the nucleus and cleaves the nuclear structural protein NUMA1 and lamin A/LMNA thereby inducing nuclear shrinkage and fragmentation. Lamin-A/LMNA cleavage is required for chromatin condensation and nuclear disassembly during apoptotic execution. Acts as a regulator of liver damage by promoting hepatocyte apoptosis: in absence of phosphorylation by AMP-activated protein kinase (AMPK), catalyzes cleavage of BID, leading to cytochrome c release, thereby participating in nonalcoholic steatohepatitis. Cleaves PARK7/DJ-1 in cells undergoing apoptosis. Involved in intrinsic apoptosis by mediating cleavage of RIPK1. Furthermore, cleaves many transcription factors such as NF-kappa-B and cAMP response element-binding protein/CREBBP. Cleaves phospholipid scramblase proteins XKR4 and XKR9. In addition to apoptosis, involved in different forms of programmed cell death. Plays an essential role in defense against viruses by acting as a central mediator of the ZBP1-mediated pyroptosis, apoptosis, and necroptosis (PANoptosis), independently of its cysteine protease activity. PANoptosis is a unique inflammatory programmed cell death, which provides a molecular scaffold that allows the interactions and activation of machinery required for inflammasome/pyroptosis, apoptosis and necroptosis. Mechanistically, interacts with RIPK3 and enhances the interaction between RIPK3 and ZBP1, leading to ZBP1-mediated inflammasome activation and cell death. Plays an essential role in axon degeneration during axon pruning which is the remodeling of axons during neurogenesis but not apoptosis. Regulates B-cell programs both during early development and after antigen stimulation. The polypeptide is Caspase-6 (Rattus norvegicus (Rat)).